The primary structure comprises 360 residues: Photosystem II protein D1 (360 aa).

3 helical membrane-spanning segments follow: residues 29-46 (YIGW…TATS), 118-133 (HFLT…EWEL), and 142-156 (WISV…AAAA). Residue His-118 participates in chlorophyll a binding. Residue Tyr-126 participates in pheophytin a binding. Residues Asp-170 and Glu-189 each coordinate [CaMn4O5] cluster. Residues 197 to 218 (FHQLGVAGVFGGSLFSAMHGSL) traverse the membrane as a helical segment. His-198 is a chlorophyll a binding site. A quinone contacts are provided by residues His-215 and 264-265 (SF). His-215 contacts Fe cation. His-272 contributes to the Fe cation binding site. Residues 274–288 (FLGLWPVVGIWLTAL) traverse the membrane as a helical segment. His-332, Glu-333, Asp-342, and Ala-344 together coordinate [CaMn4O5] cluster. Residues 345-360 (SGESLPVALTAPAVNG) constitute a propeptide that is removed on maturation.

The protein belongs to the reaction center PufL/M/PsbA/D family. In terms of assembly, PSII is composed of 1 copy each of membrane proteins PsbA, PsbB, PsbC, PsbD, PsbE, PsbF, PsbH, PsbI, PsbJ, PsbK, PsbL, PsbM, PsbT, PsbX, PsbY, PsbZ, Psb30/Ycf12, at least 3 peripheral proteins of the oxygen-evolving complex and a large number of cofactors. It forms dimeric complexes. The D1/D2 heterodimer binds P680, chlorophylls that are the primary electron donor of PSII, and subsequent electron acceptors. It shares a non-heme iron and each subunit binds pheophytin, quinone, additional chlorophylls, carotenoids and lipids. D1 provides most of the ligands for the Mn4-Ca-O5 cluster of the oxygen-evolving complex (OEC). There is also a Cl(-1) ion associated with D1 and D2, which is required for oxygen evolution. The PSII complex binds additional chlorophylls, carotenoids and specific lipids. serves as cofactor. Post-translationally, tyr-161 forms a radical intermediate that is referred to as redox-active TyrZ, YZ or Y-Z. In terms of processing, C-terminally processed by CTPA; processing is essential to allow assembly of the oxygen-evolving complex and thus photosynthetic growth.

It is found in the plastid. The protein localises to the chloroplast thylakoid membrane. It catalyses the reaction 2 a plastoquinone + 4 hnu + 2 H2O = 2 a plastoquinol + O2. Photosystem II (PSII) is a light-driven water:plastoquinone oxidoreductase that uses light energy to abstract electrons from H(2)O, generating O(2) and a proton gradient subsequently used for ATP formation. It consists of a core antenna complex that captures photons, and an electron transfer chain that converts photonic excitation into a charge separation. The D1/D2 (PsbA/PsbD) reaction center heterodimer binds P680, the primary electron donor of PSII as well as several subsequent electron acceptors. In Porphyra purpurea (Red seaweed), this protein is Photosystem II protein D1.